A 385-amino-acid chain; its full sequence is Protein pelota homolog (385 aa).

Residue lysine 162 forms a Glycyl lysine isopeptide (Lys-Gly) (interchain with G-Cter in SUMO2) linkage. Serine 374, serine 380, serine 381, and serine 382 each carry phosphoserine.

Belongs to the eukaryotic release factor 1 family. Pelota subfamily. As to quaternary structure, component of the Pelota-HBS1L complex, also named Dom34-Hbs1 complex, composed of PELO and HBS1L. Interacts with PINK1. Interacts with ABCE1. Interacts with CNOT4. Requires a divalent metal cation as cofactor.

It localises to the cytoplasm. Functionally, component of the Pelota-HBS1L complex, a complex that recognizes stalled ribosomes and triggers the No-Go Decay (NGD) pathway. In the Pelota-HBS1L complex, PELO recognizes ribosomes stalled at the 3' end of an mRNA and engages stalled ribosomes by destabilizing mRNA in the mRNA channel. Following mRNA extraction from stalled ribosomes by the SKI complex, the Pelota-HBS1L complex promotes recruitment of ABCE1, which drives the disassembly of stalled ribosomes, followed by degradation of damaged mRNAs as part of the NGD pathway. As part of the PINK1-regulated signaling, upon mitochondrial damage is recruited to the ribosome/mRNA-ribonucleoprotein complex associated to mitochondrial outer membrane thereby enabling the recruitment of autophagy receptors and induction of mitophagy. The polypeptide is Protein pelota homolog (Pelo) (Rattus norvegicus (Rat)).